An 849-amino-acid polypeptide reads, in one-letter code: Protein lap1 (849 aa).

17 LRR repeats span residues Val18–Glu39, Thr41–Cys62, Gly64–Leu85, Gln87–Cys108, His110–Leu131, Ser133–Val155, Asn156–Leu177, Asn179–Leu200, Ser202–Arg224, Asp225–Trp246, Asn248–Leu269, Ser271–Leu292, Gln294–Leu315, Ser317–Cys338, Gln340–Ser362, Lys363–Leu384, and Asn386–Asp407. Residues Asn716 to Lys752 form a disordered region. Positions Asn725–Asp735 are enriched in acidic residues. Residues Thr736 to Lys752 are compositionally biased toward polar residues. Residues Val770 to Lys849 enclose the PDZ domain.

Belongs to the LAP (LRR and PDZ) protein family.

Its function is as follows. May have a role in assembling adherens junctions. This Drosophila melanogaster (Fruit fly) protein is Protein lap1.